Reading from the N-terminus, the 347-residue chain is UDP-N-acetylglucosamine--N-acetylmuramyl-(pentapeptide) pyrophosphoryl-undecaprenol N-acetylglucosamine transferase (347 aa).

UDP-N-acetyl-alpha-D-glucosamine is bound by residues 11-13, Asn-122, Arg-163, Ser-189, and Gln-279; that span reads TGG.

Belongs to the glycosyltransferase 28 family. MurG subfamily.

Its subcellular location is the cell inner membrane. It catalyses the reaction di-trans,octa-cis-undecaprenyl diphospho-N-acetyl-alpha-D-muramoyl-L-alanyl-D-glutamyl-meso-2,6-diaminopimeloyl-D-alanyl-D-alanine + UDP-N-acetyl-alpha-D-glucosamine = di-trans,octa-cis-undecaprenyl diphospho-[N-acetyl-alpha-D-glucosaminyl-(1-&gt;4)]-N-acetyl-alpha-D-muramoyl-L-alanyl-D-glutamyl-meso-2,6-diaminopimeloyl-D-alanyl-D-alanine + UDP + H(+). Its pathway is cell wall biogenesis; peptidoglycan biosynthesis. Its function is as follows. Cell wall formation. Catalyzes the transfer of a GlcNAc subunit on undecaprenyl-pyrophosphoryl-MurNAc-pentapeptide (lipid intermediate I) to form undecaprenyl-pyrophosphoryl-MurNAc-(pentapeptide)GlcNAc (lipid intermediate II). This is UDP-N-acetylglucosamine--N-acetylmuramyl-(pentapeptide) pyrophosphoryl-undecaprenol N-acetylglucosamine transferase from Sulfurihydrogenibium sp. (strain YO3AOP1).